The primary structure comprises 430 residues: Enolase (430 aa).

Gln-163 is a binding site for (2R)-2-phosphoglycerate. The Proton donor role is filled by Glu-205. Mg(2+) is bound by residues Asp-242, Glu-287, and Asp-314. Residues Lys-339, Arg-368, Ser-369, and Lys-390 each contribute to the (2R)-2-phosphoglycerate site. The active-site Proton acceptor is the Lys-339.

The protein belongs to the enolase family. The cofactor is Mg(2+).

The protein localises to the cytoplasm. The protein resides in the secreted. It localises to the cell surface. It catalyses the reaction (2R)-2-phosphoglycerate = phosphoenolpyruvate + H2O. Its pathway is carbohydrate degradation; glycolysis; pyruvate from D-glyceraldehyde 3-phosphate: step 4/5. Functionally, catalyzes the reversible conversion of 2-phosphoglycerate (2-PG) into phosphoenolpyruvate (PEP). It is essential for the degradation of carbohydrates via glycolysis. The sequence is that of Enolase from Exiguobacterium sibiricum (strain DSM 17290 / CCUG 55495 / CIP 109462 / JCM 13490 / 255-15).